The sequence spans 275 residues: uncharacterized protein (275 aa).

An NADPH-binding site is contributed by aspartate 45. Active-site proton donor residues include tyrosine 50 and histidine 111. NADPH is bound by residues serine 139, glutamine 162, leucine 191, lysine 196, serine 232, serine 233, and arginine 237.

The protein belongs to the aldo/keto reductase family.

Its subcellular location is the cytoplasm. It is found in the nucleus. This is an uncharacterized protein from Schizosaccharomyces pombe (strain 972 / ATCC 24843) (Fission yeast).